The chain runs to 591 residues: tRNA 5-methylaminomethyl-2-thiouridine biosynthesis bifunctional protein MnmC (591 aa).

Residues 1–232 form a tRNA (mnm(5)s(2)U34)-methyltransferase region; the sequence is MTPTAPSPLV…KRERLEAWRP (232 aa). The tract at residues 247–591 is FAD-dependent cmnm(5)s(2)U34 oxidoreductase; it reads IGGGIAGAAL…FDSPVTRSRL (345 aa).

This sequence in the N-terminal section; belongs to the methyltransferase superfamily. tRNA (mnm(5)s(2)U34)-methyltransferase family. In the C-terminal section; belongs to the DAO family. It depends on FAD as a cofactor.

The protein resides in the cytoplasm. The catalysed reaction is 5-aminomethyl-2-thiouridine(34) in tRNA + S-adenosyl-L-methionine = 5-methylaminomethyl-2-thiouridine(34) in tRNA + S-adenosyl-L-homocysteine + H(+). Catalyzes the last two steps in the biosynthesis of 5-methylaminomethyl-2-thiouridine (mnm(5)s(2)U) at the wobble position (U34) in tRNA. Catalyzes the FAD-dependent demodification of cmnm(5)s(2)U34 to nm(5)s(2)U34, followed by the transfer of a methyl group from S-adenosyl-L-methionine to nm(5)s(2)U34, to form mnm(5)s(2)U34. The protein is tRNA 5-methylaminomethyl-2-thiouridine biosynthesis bifunctional protein MnmC of Caulobacter vibrioides (strain ATCC 19089 / CIP 103742 / CB 15) (Caulobacter crescentus).